Here is a 66-residue protein sequence, read N- to C-terminus: MIIPIRCFTCGKPLGHLYAVFKRRVLAGEHPGRVLDDLGVTRYCCRRTLMAHVEWIDDVLLYERRS.

Zn(2+) contacts are provided by Cys7, Cys10, Cys44, and Cys45.

Belongs to the archaeal Rpo10/eukaryotic RPB10 RNA polymerase subunit family. Part of the RNA polymerase complex. Requires Zn(2+) as cofactor.

The protein resides in the cytoplasm. It carries out the reaction RNA(n) + a ribonucleoside 5'-triphosphate = RNA(n+1) + diphosphate. Its function is as follows. DNA-dependent RNA polymerase (RNAP) catalyzes the transcription of DNA into RNA using the four ribonucleoside triphosphates as substrates. The protein is DNA-directed RNA polymerase subunit Rpo10 of Pyrobaculum aerophilum (strain ATCC 51768 / DSM 7523 / JCM 9630 / CIP 104966 / NBRC 100827 / IM2).